The chain runs to 199 residues: MHGDPQQLELLRVARIGRAQGLKGEVTVRLYTDDPEWRFEPDSVLYSQDGETEYIVEGSRTFKDRWILKLEGVDDRNAAEALNGVELYGEADDAEDMLEADEWYPKDLIGLEARLVEGNGLGLPAGQVVGKVVDVVDSPAQSLLKIRLTEPVVTGQNSKGEDVVEKTALVPFVEALVPDIDLEEQYLTLDPPGGLIPGL.

Residues 100 to 195 (ADEWYPKDLI…YLTLDPPGGL (96 aa)) form the PRC barrel domain.

The protein belongs to the RimM family. As to quaternary structure, binds ribosomal protein uS19.

It is found in the cytoplasm. An accessory protein needed during the final step in the assembly of 30S ribosomal subunit, possibly for assembly of the head region. Essential for efficient processing of 16S rRNA. May be needed both before and after RbfA during the maturation of 16S rRNA. It has affinity for free ribosomal 30S subunits but not for 70S ribosomes. This chain is Ribosome maturation factor RimM, found in Bifidobacterium longum (strain DJO10A).